The primary structure comprises 916 residues: Protein translocase subunit SecA (916 aa).

ATP-binding positions include glutamine 87, 105 to 109, and aspartate 507; that span reads GEGKT. Zn(2+) contacts are provided by cysteine 900, cysteine 902, cysteine 911, and histidine 912.

It belongs to the SecA family. As to quaternary structure, monomer and homodimer. Part of the essential Sec protein translocation apparatus which comprises SecA, SecYEG and auxiliary proteins SecDF-YajC and YidC. It depends on Zn(2+) as a cofactor.

Its subcellular location is the cell inner membrane. It localises to the cytoplasm. It carries out the reaction ATP + H2O + cellular proteinSide 1 = ADP + phosphate + cellular proteinSide 2.. Part of the Sec protein translocase complex. Interacts with the SecYEG preprotein conducting channel. Has a central role in coupling the hydrolysis of ATP to the transfer of proteins into and across the cell membrane, serving both as a receptor for the preprotein-SecB complex and as an ATP-driven molecular motor driving the stepwise translocation of polypeptide chains across the membrane. The protein is Protein translocase subunit SecA of Neisseria meningitidis serogroup B (strain ATCC BAA-335 / MC58).